Reading from the N-terminus, the 744-residue chain is Prestin (744 aa).

At 1–75 the chain is on the cytoplasmic side; it reads MDHAEENEIP…PITKWLPAYK (75 aa). The helical transmembrane segment at 76 to 104 threads the bilayer; sequence FKEYVLGDLVSGISTGVLQLPQGLAFAML. The Extracellular segment spans residues 105–108; that stretch reads AAVP. A helical transmembrane segment spans residues 109-126; that stretch reads PVFGLYSSFYPVIMYCFF. Topologically, residues 127-137 are cytoplasmic; that stretch reads GTSRHISIGPF. The helical transmembrane segment at 138–149 threads the bilayer; it reads AVISLMIGGVAV. At 150 to 168 the chain is on the extracellular side; that stretch reads RLVPDDIVIPGGVNATNGT. Residues 158-168 carry the Involved in motor function motif; that stretch reads IPGGVNATNGT. Residues Asn163 and Asn166 are each glycosylated (N-linked (GlcNAc...) asparagine). The chain crosses the membrane as a helical span at residues 169–196; the sequence is EARDALRVKVAMSVTLLSGIIQFCLGVC. At 197-206 the chain is on the cytoplasmic side; that stretch reads RFGFVAIYLT. Residues 207 to 230 traverse the membrane as a helical segment; that stretch reads EPLVRGFTTAAAVHVFTSMLKYLF. The Extracellular segment spans residues 231 to 241; sequence GVKTKRYSGIF. Residues 242–253 constitute an intramembrane region (helical); that stretch reads SVVYSTVAVLQN. Residues 254–258 are Extracellular-facing; it reads VKNLN. The helical transmembrane segment at 259–276 threads the bilayer; the sequence is VCSLGVGLMVFGLLLGGK. Residues 277-291 are Cytoplasmic-facing; that stretch reads EFNERFKEKLPAPIP. Residues 292 to 307 form a helical membrane-spanning segment; the sequence is LEFFAVVMGTGISAGF. The Extracellular portion of the chain corresponds to 308-332; sequence NLHESYSVDVVGTLPLGLLPPANPD. Residues 333–359 form a helical membrane-spanning segment; it reads TSLFHLVYVDAIAIAIVGFSVTISMAK. The Cytoplasmic segment spans residues 360–370; that stretch reads TLANKHGYQVD. A helical membrane pass occupies residues 371-388; that stretch reads GNQELIALGICNSIGSLF. The Extracellular portion of the chain corresponds to 389-396; that stretch reads QTFSISCS. A helical membrane pass occupies residues 397 to 406; the sequence is LSRSLVQEGT. Position 398 (Ser398) interacts with salicylate. Residues 407–410 lie on the Cytoplasmic side of the membrane; the sequence is GGKT. Residues 411–431 form a helical membrane-spanning segment; it reads QLAGCLASLMILLVILATGFL. The Extracellular segment spans residues 432–436; it reads FESLP. A helical transmembrane segment spans residues 437 to 464; that stretch reads QAVLSAIVIVNLKGMFMQFSDLPFFWRT. Ser465 is a topological domain (cytoplasmic). A helical transmembrane segment spans residues 466 to 481; the sequence is KIELTIWLTTFVSSLF. Topologically, residues 482 to 484 are extracellular; the sequence is LGL. The helical transmembrane segment at 485–504 threads the bilayer; that stretch reads DYGLITAVIIALLTVIYRTQ. Residues 505–718 are extended region for STAS domain; sequence SPSYTVLGQL…AVLGSQVREA (214 aa). At 505 to 744 the chain is on the cytoplasmic side; sequence SPSYTVLGQL…PNATPTTPEA (240 aa). The 189-residue stretch at 525–713 folds into the STAS domain; it reads AYEEVKEIPG…HSIHDAVLGS (189 aa). The tract at residues 720-744 is disordered; it reads AEQETTVLPPQEDMEPNATPTTPEA.

It belongs to the SLC26A/SulP transporter (TC 2.A.53) family. Homodimer. Interacts (via STAS domain) with CALM; this interaction is calcium-dependent and the STAS domain interacts with only one lobe of CALM which is an elongated conformation. Interacts with MYH1. In terms of tissue distribution, specifically expressed in outer hair cells of cochleae (at protein level). Not detected in other cells of the organ of Corti.

It localises to the lateral cell membrane. It carries out the reaction 2 hydrogencarbonate(in) + chloride(out) = 2 hydrogencarbonate(out) + chloride(in). With respect to regulation, salicylate, an inhibitor of outer hair cell motility, acts as a competitive antagonist at the prestin anion-binding site. In terms of biological role, voltage-sensitive motor protein that drives outer hair cell (OHC) electromotility (eM) and participates in sound amplification in the hearing organ. Converts changes in the transmembrane electric potential into mechanical displacements resulting in the coupling of its expansion to movement of a charged voltage sensor across the lipid membrane. The nature of the voltage sensor is not completely clear, and two models compete. In the first model, acts as an incomplete transporter where intracellular chloride anion acts as extrinsic voltage sensor that drives conformational change in the protein which is sufficient to produce a length change in the plane of the membrane and hence in the length of the OHC. The second model in which multiple charged amino acid residues are distributed at the intracellular and extracellular membrane interfaces that form an intrinsic voltage sensor, whose movement produces the non-linear capacitance (NLC). However, the effective voltage sensor may be the result of a hybrid voltage sensor assembled from intrinsic charge (charged residues) and extrinsic charge (bound anion). Notably, binding of anions to the anion-binding pocket partially neutralizes the intrinsic positive charge rather than to form an electrically negative sensor, therefore remaining charge may serve as voltage sensor that, after depolarization, moves from down (expanded state) to up (contracted) conformation, which is accompanied by an eccentric contraction of the intermembrane cross-sectional area of the protein as well as a major increase in the hydrophobic thickness of the protein having as consequences the plasma membrane thickening and the cell contraction after membrane depolarization. The anion-binding pocket transits from the inward-open (Down) state, where it is exposed toward the intracellular solvent in the absence of anion, to the occluded (Up) state upon anion binding. Salicylate competes for the anion-binding site and inhibits the voltage-sensor movement, and therefore inhibits the charge transfer and electromotility by displacing Cl(-) from the anion-binding site and by preventing the structural transitions to the contracted state. In addition, can act as a weak Cl(-)/HCO3(-) antiporter across the cell membrane and so regulate the intracellular pH of the outer hair cells (OHCs), while firstly found as being unable to mediate electrogenic anion transport. Moreover, supports a role in cardiac mechanical amplification serving as an elastic element to enhance the actomyosin- based sarcomere contraction system. The protein is Prestin of Rattus norvegicus (Rat).